The chain runs to 3010 residues: Genome polyprotein (3010 aa).

S2 carries the N-acetylserine; by host modification. Positions 2–23 (STNPKPQRKTKRNTNRRPQDVK) are interaction with STAT1. An interaction with EIF2AK2/PKR region spans residues 2-58 (STNPKPQRKTKRNTNRRPQDVKFPGGGQIVGGVYLLPRRGPRLGVRATRKTSERSQP). Positions 2-59 (STNPKPQRKTKRNTNRRPQDVKFPGGGQIVGGVYLLPRRGPRLGVRATRKTSERSQPR) are interaction with DDX3X. Residues 2-75 (STNPKPQRKT…PKARQPEGRA (74 aa)) form a disordered region. Residues 2-168 (STNPKPQRKT…EDGVNYATGN (167 aa)) are Cytoplasmic-facing. 2 short sequence motifs (nuclear localization signal) span residues 5–13 (PKPQRKTKR) and 38–43 (PRRGPR). The span at 7 to 16 (PQRKTKRNTN) shows a compositional bias: basic residues. Positions 32–47 (GGVYLLPRRGPRLGVR) are enriched in low complexity. S53 bears the Phosphoserine; by host mark. 2 consecutive short sequence motifs (nuclear localization signal) follow at residues 58-64 (PRGRRQP) and 66-71 (PKARQP). Phosphoserine; by host is present on S99. The interval 112 to 152 (PRRRSRNLGKVIDTLTCGFADLMGYIPLVGAPLGGVARALA) is important for endoplasmic reticulum and mitochondrial localization. At S116 the chain carries Phosphoserine; by host PKA. Positions 122–173 (VIDTLTCGFADLMGYIPLVGAPLGGVARALAHGVRVVEDGVNYATGNLPGCS) are interaction with APOA2. Residues 164-167 (YATG) form an important for lipid droplets localization region. The helical transmembrane segment at 169-189 (LPGCSFSIFLLALLSCLTIPA) threads the bilayer. Residues 178-191 (LLALLSCLTIPASA) constitute a propeptide, ER anchor for the core protein, removed in mature form by host signal peptidase. Residues 190–358 (SAYEVRNVSG…AGAHWGVLAG (169 aa)) are Lumenal-facing. 4 N-linked (GlcNAc...) asparagine; by host glycosylation sites follow: N196, N209, N234, and N250. Residues 265–296 (LVGAAAFCSAMYVGDLCGSVFLVSQLFTFSPR) form an important for fusion region. Residue N305 is glycosylated (N-linked (GlcNAc...) asparagine; by host). A helical transmembrane segment spans residues 359 to 379 (LAYYSMVGNWAKVLIVMLLFA). The Lumenal segment spans residues 380–725 (GVDGETRVTG…WDYIVILFLL (346 aa)). Residues 385–411 (TRVTGGQIARNAYSLTTLFSSGSAQNI) form an HVR1 region. Residues N417, N423, N430, and N448 are each glycosylated (N-linked (GlcNAc...) (high mannose) asparagine; by host). 4 disulfide bridges follow: C429/C552, C452/C459, C486/C494, and C503/C508. The HVR2 stretch occupies residues 474–479 (YAEQGG). The CD81-binding 1 stretch occupies residues 480-493 (QDQRPYCWHYAPKP). N-linked (GlcNAc...) (high mannose) asparagine; by host glycosylation occurs at N532. N540 carries an N-linked (GlcNAc...) asparagine; by host glycan. The segment at 544-551 (PPQGNWFG) is CD81-binding 2. N556 is a glycosylation site (N-linked (GlcNAc...) (high mannose) asparagine; by host). A disulfide bridge links C564 with C569. The N-linked (GlcNAc...) (high mannose) asparagine; by host glycan is linked to N576. Disulfide bonds link C581/C585, C597/C620, and C607/C644. N-linked (GlcNAc...) (high mannose) asparagine; by host glycosylation is found at N623 and N645. The cysteines at positions 652 and 677 are disulfide-linked. The segment at 660 to 671 (LELSPLLLSTTE) is PKR/eIF2-alpha phosphorylation homology domain (PePHD). A helical transmembrane segment spans residues 726 to 746 (LADARVCACLWMMLLIAQAEA). The Lumenal segment spans residues 747 to 757 (ALENLVVLNAA). A helical membrane pass occupies residues 758-778 (SVAGAHGILSFLVFFCAAWYI). The Cytoplasmic segment spans residues 779 to 781 (KGK). Residues 782 to 803 (LVPGAAYAFYGVWPLLLLLLAL) traverse the membrane as a helical segment. Topologically, residues 804 to 813 (PPRAYAMERE) are lumenal. The helical transmembrane segment at 814–834 (MAASCGGAVFVGLVLLTLSPY) threads the bilayer. The Cytoplasmic segment spans residues 835–838 (YKEF). A helical transmembrane segment spans residues 839–859 (LARLIWWLQYFITRAEAHLQV). Over 860–881 (WIPPLNIRGGRDAIILLACVVH) the chain is Lumenal. Residues 882 to 902 (PELIFDITKLLLAILGPLMVL) form a helical membrane-spanning segment. The 124-residue stretch at 903-1026 (QASITQVPYF…SLEGQGWRLL (124 aa)) folds into the Peptidase C18 domain. Over 903–1657 (QASITQVPYF…CMSADLEVVT (755 aa)) the chain is Cytoplasmic. Residues 904 to 1206 (ASITQVPYFV…PVESMETTMR (303 aa)) are protease NS2-3. C922 is lipidated: S-palmitoyl cysteine; by host. Positions 929–949 (AGGHYVQMAFVKLTALTGTYV) are interaction with host SCPS1. Catalysis depends on for protease NS2 activity; shared with dimeric partner residues H952, E972, and C993. A Peptidase S29 domain is found at 1027–1208 (APITAYSQQT…ESMETTMRSP (182 aa)). Active-site charge relay system; for serine protease NS3 activity residues include H1083 and D1107. 2 residues coordinate Zn(2+): C1123 and C1125. S1165 acts as the Charge relay system; for serine protease NS3 activity in catalysis. Zn(2+) contacts are provided by C1171 and H1175. The 153-residue stretch at 1217–1369 (PAVPQTFQVA…PNIEEVALSN (153 aa)) folds into the Helicase ATP-binding domain. Position 1230-1237 (1230-1237 (APTGSGKS)) interacts with ATP. Residues S1237 and E1317 each contribute to the Mg(2+) site. The DECH box motif lies at 1316-1319 (DECH). An RNA-binding region spans residues 1486–1497 (QRRGRTGRGRRG). Residues 1658 to 1678 (STWVLVGGVLAALAAYCLTTG) traverse the membrane as a helical segment. The segment at 1679-1690 (SVVIVGRIILSG) is NS3-binding. The Cytoplasmic segment spans residues 1679–1805 (SVVIVGRIIL…SITSPLSTQN (127 aa)). A helical transmembrane segment spans residues 1806–1824 (TLLFNIWGGWVAAQLAPPS). Over 1825-1828 (AASA) the chain is Lumenal. The chain crosses the membrane as a helical span at residues 1829–1849 (FVGAGIAGAAVGSIGLGKVLV). D1850 is a topological domain (cytoplasmic). A helical membrane pass occupies residues 1851-1871 (ILAGYGAGVAGALVAFKIMSG). Residues 1872 to 1881 (EVPSTEDLVN) are Lumenal-facing. The chain crosses the membrane as a helical span at residues 1882–1902 (LLPAILSPGALVVGVVCAAIL). Topologically, residues 1903–1972 (RRHVGPGEGA…WINEDCSTPC (70 aa)) are cytoplasmic. 2 S-palmitoyl cysteine; by host lipidation sites follow: C1968 and C1972. An intramembrane segment occupies 1973 to 2002 (SGSWLRDVWDWICTVLTDFKTWLQSKLLPR). Over 2003–2989 (LPGVPFFSCQ…YHSLSRARPR (987 aa)) the chain is Cytoplasmic. Zn(2+) is bound by residues C2011, C2029, C2031, and C2052. The tract at residues 2120 to 2208 (EFFTEVDGVR…ASSSASQLSA (89 aa)) is FKBP8-binding. The interval 2120 to 2332 (EFFTEVDGVR…PIPPPRRKRT (213 aa)) is transcriptional activation. Residues 2135–2139 (PACKP) are interaction with non-structural protein 4A. An interaction with host SKP2 region spans residues 2189-2441 (RLARGSPPSL…PCAAEESKLP (253 aa)). At S2194 the chain carries Phosphoserine; by host; in p56. S2197, S2201, S2204, S2207, and S2210 each carry phosphoserine; by host; in p58. Residues 2210-2249 (SLKATCTTHHDSPDVDLIEANLLWRQEMGGNITRVESENK) form an ISDR region. The interval 2210-2275 (SLKATCTTHH…REPSVAAEIL (66 aa)) is interaction with EIF2AK2/PKR. Residues 2249–2306 (KVVILDSFDPLRAEEDEREPSVAAEILRKTKRFPPAMPIWARPDYNPPLLESWKDPDY) are NS4B-binding. The short motif at 2322–2325 (PPIP) is the SH3-binding element. Residues 2326–2334 (PPRRKRTVV) carry the Nuclear localization signal motif. K2350 participates in a covalent cross-link: Glycyl lysine isopeptide (Lys-Gly) (interchain with G-Cter in ubiquitin). Positions 2351 to 2365 (TFGSSGSSAVDSGTA) are enriched in polar residues. Residues 2351-2407 (TFGSSGSSAVDSGTATAPPDQASDDGDQGSDVESYSSMPPLEGEPGDPDLSDGSWST) form a disordered region. The tract at residues 2354-2377 (SSGSSAVDSGTATAPPDQASDDGD) is V3. Residues S2448 and S2461 each carry the phosphoserine; by host modification. The 119-residue stretch at 2633-2751 (PMGFSYDTRC…ICESAGTQED (119 aa)) folds into the RdRp catalytic domain. Residues D2639, D2737, and D2738 each contribute to the Mg(2+) site. A helical membrane pass occupies residues 2990–3010 (WFMLCLLLLSVGVGIYLLPNR).

It belongs to the hepacivirus polyprotein family. As to quaternary structure, homooligomer. Interacts with E1 (via C-terminus). Interacts with the non-structural protein 5A. Interacts (via N-terminus) with host STAT1 (via SH2 domain); this interaction results in decreased STAT1 phosphorylation and ubiquitin-mediated proteasome-dependent STAT1 degradation, leading to decreased IFN-stimulated gene transcription. Interacts with host STAT3; this interaction constitutively activates STAT3. Interacts with host LTBR receptor. Interacts with host TNFRSF1A receptor and possibly induces apoptosis. Interacts with host HNRPK. Interacts with host YWHAE. Interacts with host UBE3A/E6AP. Interacts with host DDX3X. Interacts with host APOA2. Interacts with host RXRA protein. Interacts with host SP110 isoform 3/Sp110b; this interaction sequesters the transcriptional corepressor SP110 away from the nucleus. Interacts with host CREB3 nuclear transcription protein; this interaction triggers cell transformation. Interacts with host ACY3. Interacts with host C1QR1. Interacts with host RBM24; this interaction, which enhances the interaction of the mature core protein with 5'-UTR, may inhibit viral translation and favor replication. Interacts with host EIF2AK2/PKR; this interaction induces the autophosphorylation of EIF2AK2. Part of the viral assembly initiation complex composed of NS2, E1, E2, NS3, NS4A, NS5A and the mature core protein. Forms a heterodimer with envelope glycoprotein E2. Interacts with mature core protein. Interacts with protease NS2. The heterodimer E1/E2 interacts with host CLDN1; this interaction plays a role in viral entry into host cell. Interacts with host SPSB2 (via C-terminus). Part of the viral assembly initiation complex composed of NS2, E1, E2, NS3, NS4A, NS5A and the mature core protein. Interacts with host NEURL3; this interaction prevents E1 binding to glycoprotein E2. In terms of assembly, forms a heterodimer with envelope glycoprotein E1. Interacts with host CD81 and SCARB1 receptors; these interactions play a role in viral entry into host cell. Interacts with host EIF2AK2/PKR; this interaction inhibits EIF2AK2 and probably allows the virus to evade the innate immune response. Interacts with host CD209/DC-SIGN and CLEC4M/DC-SIGNR. Interact with host SPCS1; this interaction is essential for viral particle assembly. Interacts with protease NS2. The heterodimer E1/E2 interacts with host CLDN1; this interaction plays a role in viral entry into host cell. Part of the viral assembly initiation complex composed of NS2, E1, E2, NS3, NS4A, NS5A and the mature core protein. Interacts with host SLC3A2/4F2hc; the interaction may facilitate viral entry into host cell. Interacts with human PLSCR1. As to quaternary structure, homohexamer. Homoheptamer. Interacts with protease NS2. Homodimer. Interacts with host SPCS1; this interaction is essential for viral particle assembly. Interacts with envelope glycoprotein E1. Interacts with envelope glycoprotein E2. Interacts with viroporin p7. Interacts with serine protease/helicase NS3. Part of the replication complex composed of NS2, NS3, NS4A, NS4B, NS5A and the RNA-directed RNA polymerase embedded in an ER-derived membranous web. Part of the viral assembly initiation complex composed of NS2, E1, E2, NS3, NS4A, NS5A and the mature core protein. In terms of assembly, interacts with protease NS2. Interacts with non-structural protein 4A; this interaction stabilizes the folding of NS3 serine protease. NS3-NS4A interaction is essential for NS3 activation and allows membrane anchorage of the latter. NS3/NS4A complex also prevents phosphorylation of host IRF3, thus preventing the establishment of dsRNA induced antiviral state. Interacts with host MAVS; this interaction leads to the cleavage and inhibition of host MAVS. Interacts with host TICAM1; this interaction leads to the cleavage and inhibition of host TICAM1. Interacts with host TANK-binding kinase/TBK1; this interaction results in the inhibition of the association between TBK1 and IRF3, which leads to the inhibition of IRF3 activation. Interacts with host RBM24. Part of the replication complex composed of NS2, NS3, NS4A, NS4B, NS5A and the RNA-directed RNA polymerase embedded in an ER-derived membranous web. Part of the viral assembly initiation complex composed of NS2, E1, E2, NS3, NS4A, NS5A and the mature core protein. As to quaternary structure, interacts with NS3 serine protease; this interaction stabilizes the folding of NS3 serine protease. NS3-NS4A interaction is essential for NS3 activation and allows membrane anchorage of the latter. Interacts with non-structural protein 5A (via N-terminus). Part of the replication complex composed of NS2, NS3, NS4A, NS4B, NS5A and the RNA-directed RNA polymerase embedded in an ER-derived membranous web. Part of the viral assembly initiation complex composed of NS2, E1, E2, NS3, NS4A, NS5A and the mature core protein. Homomultimer. Interacts with non-structural protein NS5A. Interacts with host PLA2G4C; this interaction likely initiates the recruitment of replication complexes to lipid droplets. Interacts with host STING; this interaction disrupts the interaction between STING and TBK1 thereby suppressing the interferon signaling. Part of the replication complex composed of NS2, NS3, NS4A, NS4B, NS5A and the RNA-directed RNA polymerase embedded in an ER-derived membranous web. In terms of assembly, monomer. Homodimer; dimerization is required for RNA-binding. Interacts with the mature core protein. Interacts (via N-terminus) with non-structural protein 4A. Interacts with non-structural protein 4B. Interacts (via region D2) with RNA-directed RNA polymerase. Part of the viral assembly initiation complex composed of NS2, E1, E2, NS3, NS4A, NS5A and the mature core protein. Part of the replication complex composed of NS2, NS3, NS4A, NS4B, NS5A and the RNA-directed RNA polymerase embedded in an ER-derived membranous web. Interacts with host GRB2. Interacts with host BIN1. Interacts with host PIK3R1. Interacts with host SRCAP. Interacts with host FKBP8. Interacts (via C-terminus) with host VAPB (via MSP domain). Interacts with host EIF2AK2/PKR; this interaction leads to disruption of EIF2AK2 dimerization by NS5A and probably allows the virus to evade the innate immune response. Interacts (via N-terminus) with host PACSIN2 (via N-terminus); this interaction attenuates protein kinase C alpha-mediated phosphorylation of PACSIN2 by disrupting the interaction between PACSIN2 and PRKCA. Interacts (via N-terminus) with host SRC kinase (via SH2 domain). Interacts with most Src-family kinases. Interacts with host IFI27 and SKP2; promotes the ubiquitin-mediated proteasomal degradation of NS5A. Interacts with host GPS2. Interacts with host TNFRSF21; this interaction allows the modulation by the virus of JNK, p38 MAPK, STAT3, and Akt signaling pathways in a DR6-dependent manner. Interacts (via N-terminus) with host CIDEB (via N-terminus); this interaction seems to regulate the association of HCV particles with APOE. Interacts with host CHKA/Choline Kinase-alpha; CHKA bridges host PI4KA and NS5A and potentiates NS5A-stimulated PI4KA activity, which then facilitates the targeting of the ternary complex to the ER for viral replication. Interacts with host SPSB2 (via C-terminus); this interaction targets NS5A for ubiquitination and degradation. Interacts with host RAB18; this interaction may promote the association of NS5A and other replicase components with lipid droplets. Interacts (via region D2) with host PPIA/CYPA; the interaction stimulates RNA-binding ability of NS5A and is dependent on the peptidyl-prolyl cis-trans isomerase activity of PPIA/CYPA. Interacts with host TRIM14; this interaction induces the degradation of NS5A. As to quaternary structure, homooligomer. Interacts with non-structural protein 5A. Interacts with host VAPB. Interacts with host PRK2/PKN2. Interacts with host HNRNPA1 and SEPT6; these interactions facilitate viral replication. Part of the replication complex composed of NS2, NS3, NS4A, NS4B, NS5A and the RNA-directed RNA polymerase. The cofactor is Zn(2+). Requires Mg(2+) as cofactor. Post-translationally, specific enzymatic cleavages in vivo yield mature proteins. The structural proteins, core, E1, E2 and p7 are produced by proteolytic processing by host signal peptidases. The core protein precursor is synthesized as a 23 kDa, which is retained in the ER membrane through the hydrophobic signal peptide. Cleavage by the signal peptidase releases the 21 kDa mature core protein. The cleavage of the core protein precursor occurs between aminoacids 176 and 188 but the exact cleavage site is not known. Some degraded forms of the core protein appear as well during the course of infection. The other proteins (p7, NS2, NS3, NS4A, NS4B, NS5A and NS5B) are cleaved by the viral proteases. Autoprocessing between NS2 and NS3 is mediated by the NS2 cysteine protease catalytic domain and regulated by the NS3 N-terminal domain. Phosphorylated by host PKC and PKA. In terms of processing, ubiquitinated; mediated by UBE3A and leading to core protein subsequent proteasomal degradation. Post-translationally, highly N-glycosylated. Palmitoylation is required for NS2/3 autoprocessing and E2 recruitment to membranes. In terms of processing, palmitoylated. This modification may play a role in its polymerization or in protein-protein interactions. Post-translationally, phosphorylated on serines in a basal form termed p56. p58 is a hyperphosphorylated form of p56. p56 and p58 coexist in the cell in roughly equivalent amounts. Hyperphosphorylation is dependent on the presence of NS4A. Host CSNK1A1/CKI-alpha or RPS6KB1 kinases may be responsible for NS5A phosphorylation. Tyrosine phosphorylation is essential for the interaction with host SRC. In terms of processing, ubiquitinated. Ubiquitination, most probably at Lys-2350, mediated by host IFI27 and SKP2 leads to proteasomal degradation, restricting viral infection. Ubiquitination by host TRIM22 leads to interruption of viral replication. Post-translationally, the N-terminus is phosphorylated by host PRK2/PKN2.

It localises to the host endoplasmic reticulum membrane. Its subcellular location is the host mitochondrion membrane. The protein localises to the virion. It is found in the host cytoplasm. The protein resides in the host nucleus. It localises to the host lipid droplet. Its subcellular location is the virion membrane. The protein localises to the host mitochondrion. It is found in the host cell membrane. The protein resides in the host perinuclear region. The catalysed reaction is Hydrolysis of four peptide bonds in the viral precursor polyprotein, commonly with Asp or Glu in the P6 position, Cys or Thr in P1 and Ser or Ala in P1'.. It catalyses the reaction a ribonucleoside 5'-triphosphate + H2O = a ribonucleoside 5'-diphosphate + phosphate + H(+). The enzyme catalyses ATP + H2O = ADP + phosphate + H(+). It carries out the reaction RNA(n) + a ribonucleoside 5'-triphosphate = RNA(n+1) + diphosphate. With respect to regulation, inhibited by the antiviral drug hexamethylene amiloride. Inhibition by amantadine appears to be genotype-dependent. Also inhibited by long-alkyl-chain iminosugar derivatives. Activity is up-regulated by PRK2/PKN2-mediated phosphorylation. Its function is as follows. Packages viral RNA to form a viral nucleocapsid, and promotes virion budding. Participates in the viral particle production as a result of its interaction with the non-structural protein 5A. Binds RNA and may function as a RNA chaperone to induce the RNA structural rearrangements taking place during virus replication. Modulates viral translation initiation by interacting with viral IRES and 40S ribosomal subunit. Affects various cell signaling pathways, host immunity and lipid metabolism. Prevents the establishment of cellular antiviral state by blocking the interferon-alpha/beta (IFN-alpha/beta) and IFN-gamma signaling pathways and by blocking the formation of phosphorylated STAT1 and promoting ubiquitin-mediated proteasome-dependent degradation of STAT1. Activates STAT3 leading to cellular transformation. Regulates the activity of cellular genes, including c-myc and c-fos. May repress the promoter of p53, and sequester CREB3 and SP110 isoform 3/Sp110b in the cytoplasm. Represses cell cycle negative regulating factor CDKN1A, thereby interrupting an important check point of normal cell cycle regulation. Targets transcription factors involved in the regulation of inflammatory responses and in the immune response: suppresses TNF-induced NF-kappa-B activation, and activates AP-1. Binds to dendritic cells (DCs) via C1QR1, resulting in down-regulation of T-lymphocytes proliferation. Alters lipid metabolism by interacting with hepatocellular proteins involved in lipid accumulation and storage. Induces up-regulation of FAS promoter activity, and thereby contributes to the increased triglyceride accumulation in hepatocytes (steatosis). Forms a heterodimer with envelope glycoprotein E2, which mediates virus attachment to the host cell, virion internalization through clathrin-dependent endocytosis and fusion with host membrane. Fusion with the host cell is most likely mediated by both E1 and E2, through conformational rearrangements of the heterodimer required for fusion rather than a classical class II fusion mechanism. E1/E2 heterodimer binds host apolipoproteins such as APOB and APOE thereby forming a lipo-viro-particle (LVP). APOE associated to the LVP allows the initial virus attachment to cell surface receptors such as the heparan sulfate proteoglycans (HSPGs), syndecan-1 (SDC1), syndecan-1 (SDC2), the low-density lipoprotein receptor (LDLR) and scavenger receptor class B type I (SCARB1). The cholesterol transfer activity of SCARB1 allows E2 exposure and binding of E2 to SCARB1 and the tetraspanin CD81. E1/E2 heterodimer binding on CD81 activates the epithelial growth factor receptor (EGFR) signaling pathway. Diffusion of the complex E1-E2-EGFR-SCARB1-CD81 to the cell lateral membrane allows further interaction with Claudin 1 (CLDN1) and occludin (OCLN) to finally trigger HCV entry. In terms of biological role, forms a heterodimer with envelope glycoprotein E1, which mediates virus attachment to the host cell, virion internalization through clathrin-dependent endocytosis and fusion with host membrane. Fusion with the host cell is most likely mediated by both E1 and E2, through conformational rearrangements of the heterodimer required for fusion rather than a classical class II fusion mechanism. The interaction between envelope glycoprotein E2 and host apolipoprotein E/APOE allows the proper assembly, maturation and infectivity of the viral particles. This interaction is probably promoted via the up-regulation of cellular autophagy by the virus. E1/E2 heterodimer binds host apolipoproteins such as APOB and APOE thereby forming a lipo-viro-particle (LVP). APOE associated to the LVP allows the initial virus attachment to cell surface receptors such as the heparan sulfate proteoglycans (HSPGs), syndecan-1 (SDC1), syndecan-1 (SDC2), the low-density lipoprotein receptor (LDLR) and scavenger receptor class B type I (SCARB1). The cholesterol transfer activity of SCARB1 allows E2 exposure and binding of E2 to SCARB1 and the tetraspanin CD81. E1/E2 heterodimer binding on CD81 activates the epithelial growth factor receptor (EGFR) signaling pathway. Diffusion of the complex E1-E2-EGFR-SCARB1-CD81 to the cell lateral membrane allows further interaction with Claudin 1 (CLDN1) and occludin (OCLN) to finally trigger HCV entry. Inhibits host EIF2AK2/PKR activation, preventing the establishment of an antiviral state. Viral ligand for CD209/DC-SIGN and CLEC4M/DC-SIGNR, which are respectively found on dendritic cells (DCs), and on liver sinusoidal endothelial cells and macrophage-like cells of lymph node sinuses. These interactions allow the capture of circulating HCV particles by these cells and subsequent facilitated transmission to permissive cells such as hepatocytes and lymphocyte subpopulations. The interaction between E2 and host amino acid transporter complex formed by SLC3A2 and SLC7A5/LAT1 may facilitate viral entry into host cell. Functionally, ion channel protein that acts as a viroporin and plays an essential role in the assembly, envelopment and secretion of viral particles. Regulates the host cell secretory pathway, which induces the intracellular retention of viral glycoproteins and favors assembly of viral particles. Creates a pore in acidic organelles and releases Ca(2+) and H(+) in the cytoplasm of infected cells, leading to a productive viral infection. High levels of cytoplasmic Ca(2+) may trigger membrane trafficking and transport of viral ER-associated proteins to viroplasms, sites of viral genome replication. This ionic imbalance induces the assembly of the inflammasome complex, which triggers the maturation of pro-IL-1beta into IL-1beta through the action of caspase-1. Targets also host mitochondria and induces mitochondrial depolarization. In addition of its role as a viroporin, acts as a lipid raft adhesion factor. Its function is as follows. Cysteine protease required for the proteolytic auto-cleavage between the non-structural proteins NS2 and NS3. The N-terminus of NS3 is required for the function of NS2 protease (active region NS2-3). Promotes the initiation of viral particle assembly by mediating the interaction between structural and non-structural proteins. Displays three enzymatic activities: serine protease with a chymotrypsin-like fold, NTPase and RNA helicase. NS3 serine protease, in association with NS4A, is responsible for the cleavages of NS3-NS4A, NS4A-NS4B, NS4B-NS5A and NS5A-NS5B. The NS3/NS4A complex prevents phosphorylation of host IRF3, thus preventing the establishment of dsRNA induced antiviral state. The NS3/NS4A complex induces host amino acid transporter component SLC3A2, thus contributing to HCV propagation. NS3 RNA helicase binds to RNA and unwinds both dsDNA and dsRNA in the 3' to 5' direction, and likely resolves RNA complicated stable secondary structures in the template strand. Binds a single ATP and catalyzes the unzipping of a single base pair of dsRNA. Inhibits host antiviral proteins TBK1 and IRF3 thereby preventing the establishment of an antiviral state. Cleaves host MAVS/CARDIF thereby preventing the establishment of an antiviral state. Cleaves host TICAM1/TRIF, thereby disrupting TLR3 signaling and preventing the establishment of an antiviral state. In terms of biological role, peptide cofactor which forms a non-covalent complex with the N-terminal of NS3 serine protease. The NS3/NS4A complex prevents phosphorylation of host IRF3, thus preventing the establishment of dsRNA induced antiviral state. The NS3/NS4A complex induces host amino acid transporter component SLC3A2, thus contributing to HCV propagation. Functionally, induces a specific membrane alteration that serves as a scaffold for the virus replication complex. This membrane alteration gives rise to the so-called ER-derived membranous web that contains the replication complex. NS4B self-interaction contributes to its function in membranous web formation. Promotes host TRIF protein degradation in a CASP8-dependent manner thereby inhibiting host TLR3-mediated interferon signaling. Disrupts the interaction between STING and TBK1 contributing to the inhibition of interferon signaling. Its function is as follows. Phosphorylated protein that is indispensable for viral replication and assembly. Both hypo- and hyperphosphorylated states are required for the viral life cycle. The hyperphosphorylated form of NS5A is an inhibitor of viral replication. Involved in RNA-binding and especially in binding to the viral genome. Zinc is essential for RNA-binding. Participates in the viral particle production as a result of its interaction with the mature viral core protein. Its interaction with host VAPB may target the viral replication complex to vesicles. Down-regulates viral IRES translation initiation. Mediates interferon resistance, presumably by interacting with and inhibiting host EIF2AK2/PKR. Prevents BIN1-induced apoptosis. Acts as a transcriptional activator of some host genes important for viral replication when localized in the nucleus. Via the interaction with host PACSIN2, modulates lipid droplet formation in order to promote virion assembly. Modulates TNFRSF21/DR6 signaling pathway for viral propagation. RNA-dependent RNA polymerase that performs primer-template recognition and RNA synthesis during viral replication. Initiates RNA transcription/replication at a flavin adenine dinucleotide (FAD), resulting in a 5'- FAD cap on viral RNAs. In this way, recognition of viral 5' RNA by host pattern recognition receptors can be bypassed, thereby evading activation of antiviral pathways. The protein is Genome polyprotein of Homo sapiens (Human).